Here is a 264-residue protein sequence, read N- to C-terminus: Apolipoprotein A-I (264 aa).

Residues 1 to 18 (MKAVLLVVAALFLAGSQA) form the signal peptide. A run of 2 repeats spans residues 67–88 (LRLSDNWDTLSTILTKLQADFG) and 89–110 (LATQEFWDTLEKETEWLKQIVS). The segment at 67–264 (LRLSDNWDTL…DQASKQLAAQ (198 aa)) is 10 X approximate tandem repeats. The stretch at 111–121 (EDLQDVKHKVQ) is one 3; half-length repeat. 5 repeat units span residues 122–143 (PYLENFQKKVQEEVEHYREKVR), 144–165 (PLGIELRDGARQKLQELQEKLT), 166–187 (PLGEDLRDRTREHVDVLRTQLA), 188–207 (PFSEEMRQRLAKRLEELKDS), and 208–229 (ATLADYHAKASEHLKMLGEKAK). M193 carries the post-translational modification Methionine sulfoxide. A 9; half-length repeat occupies 230-240 (PALEDLRQGLL). Residues 241–264 (PVLENLKASILSSIDQASKQLAAQ) form repeat 10.

The protein belongs to the apolipoprotein A1/A4/E family. Homodimer. Interacts with APOA1BP and CLU. Component of a sperm activating protein complex (SPAP), consisting of APOA1, an immunoglobulin heavy chain, an immunoglobulin light chain and albumin. Interacts with NDRG1. Interacts with SCGB3A2. Interacts with NAXE and YJEFN3. In terms of processing, glycosylated. Post-translationally, palmitoylated. Phosphorylation sites are present in the extracellular medium.

The protein localises to the secreted. In terms of biological role, participates in the reverse transport of cholesterol from tissues to the liver for excretion by promoting cholesterol efflux from tissues and by acting as a cofactor for the lecithin cholesterol acyltransferase (LCAT). As part of the SPAP complex, activates spermatozoa motility. The protein is Apolipoprotein A-I (APOA1) of Cavia porcellus (Guinea pig).